Consider the following 202-residue polypeptide: MNAAVPPEQAHSCGWGTEGCPCLRSTAIRQTFFPGGDQFQRDGGLAMLPILVSKFLASSDPPVSVPEMLGLQNRWRGMKNEEHCPGSFFLCKIRECVLNYRFQLQHPGFQHYLQSSGRRDRGRSEDKKPLEAGVWCWDRGGWDGSSRAVHLLFRGVAHPSLYLFPREDPPRLLFPRLSLLVCEQFWCYSATLLLAPLPASTC.

This is an uncharacterized protein from Homo sapiens (Human).